The primary structure comprises 576 residues: Sodium/proton antiporter 1 (576 aa).

Residues 1-60 (MAVFPIGSHFAPPHQLTKRHVIATSSPISISTRLPQNVSFSKVSGVTGSTRLSKHGVLVR) constitute a chloroplast transit peptide. 9 consecutive transmembrane segments (helical) span residues 237–257 (TLLW…DNLT), 279–299 (LGGV…IGDV), 320–340 (FLPS…TSEV), 357–377 (APRG…VPVF), 379–399 (ALTG…LWIL), 426–446 (GALF…AGIL), 462–482 (LIAS…LVAA), 501–521 (LIAF…AAGV), and 541–561 (FAFA…NLHF).

The protein belongs to the NhaD Na(+)/H(+) (TC 2.A.62) antiporter family. As to expression, mostly expressed in mature and senescent leaves, and, to a lower extent, in seeds, roots, shoots, flowers and developing siliques.

It is found in the plastid. Its subcellular location is the chloroplast membrane. The protein localises to the chloroplast envelope. Na(+)/H(+) antiporter that extrudes sodium in exchange for external protons. The protein is Sodium/proton antiporter 1 of Arabidopsis thaliana (Mouse-ear cress).